The chain runs to 1185 residues: Chromosome partition protein Smc (1185 aa).

32–39 (PNGSGKSN) is an ATP binding site. Residues 228–503 (SRLVKKLTIA…LQAVQERYTN (276 aa)) adopt a coiled-coil conformation. Residues 300 to 323 (TQGQQGVDAERRQNQQSEQERLTA) form a disordered region. Basic and acidic residues predominate over residues 307–320 (DAERRQNQQSEQER). Residues 519–637 (SGVAGAVSEL…VDTLDHAMAI (119 aa)) form the SMC hinge domain. Coiled coils occupy residues 675 to 928 (QQQQ…RRLE) and 989 to 1025 (AIDE…ADLD).

This sequence belongs to the SMC family. As to quaternary structure, homodimer.

The protein resides in the cytoplasm. Functionally, required for chromosome condensation and partitioning. The protein is Chromosome partition protein Smc of Lactiplantibacillus plantarum (strain ATCC BAA-793 / NCIMB 8826 / WCFS1) (Lactobacillus plantarum).